The sequence spans 503 residues: Transmembrane prolyl 4-hydroxylase (503 aa).

The tract at residues methionine 1–proline 49 is disordered. The Cytoplasmic segment spans residues methionine 1 to tyrosine 61. A helical; Signal-anchor for type II membrane protein transmembrane segment spans residues phenylalanine 62–phenylalanine 82. Topologically, residues valine 83–leucine 503 are lumenal. Residues glutamate 90–glycine 110 form a disordered region. EF-hand domains follow at residues alanine 186–arginine 221 and proline 225–lysine 260. Residues aspartate 199, asparagine 201, aspartate 203, arginine 205, glutamate 210, aspartate 238, aspartate 240, aspartate 242, and glutamate 249 each coordinate Ca(2+). Residues glutamate 310–valine 461 form the Fe2OG dioxygenase domain. Fe cation is bound by residues histidine 329 and aspartate 331. Asparagine 349 and asparagine 369 each carry an N-linked (GlcNAc...) asparagine glycan. Glutamate 375 provides a ligand contact to Fe cation. Asparagine 383 carries an N-linked (GlcNAc...) asparagine glycan. Lysine 452 provides a ligand contact to 2-oxoglutarate.

Homodimer. The cofactor is Fe(2+). L-ascorbate is required as a cofactor. Glycosylated. In terms of tissue distribution, highest expression levels are detected in the eye and brain, especially in the retinal epithelium cells and cortical neurons. Also expressed in skeletal muscle, lung, heart, adrenal gland, kidney, prostate, thyroid and testis.

It localises to the endoplasmic reticulum membrane. It carries out the reaction L-prolyl-[hypoxia-inducible factor alpha subunit] + 2-oxoglutarate + O2 = trans-4-hydroxy-L-prolyl-[hypoxia-inducible factor alpha subunit] + succinate + CO2. Catalyzes the post-translational formation of 4-hydroxyproline in hypoxia-inducible factor (HIF) alpha proteins. Hydroxylates HIF1A at 'Pro-402' and 'Pro-564'. May function as a cellular oxygen sensor and, under normoxic conditions, may target HIF through the hydroxylation for proteasomal degradation via the von Hippel-Lindau ubiquitination complex. The sequence is that of Transmembrane prolyl 4-hydroxylase (P4htm) from Mus musculus (Mouse).